A 237-amino-acid polypeptide reads, in one-letter code: Ribonuclease 3 (237 aa).

Residues 4 to 133 form the RNase III domain; it reads LTELEKSLGV…VLAAIYLDKG (130 aa). Glutamate 46 contributes to the Mg(2+) binding site. Catalysis depends on residues aspartate 50 and glutamate 122. A Mg(2+)-binding site is contributed by glutamate 122. One can recognise a DRBM domain in the interval 160 to 229; the sequence is DYKSRLQELV…AKEALQQFEN (70 aa).

This sequence belongs to the ribonuclease III family. Homodimer. Mg(2+) is required as a cofactor.

It localises to the cytoplasm. It catalyses the reaction Endonucleolytic cleavage to 5'-phosphomonoester.. Digests double-stranded RNA. Involved in the processing of primary rRNA transcript to yield the immediate precursors to the large and small rRNAs (23S and 16S). Processes some mRNAs, and tRNAs when they are encoded in the rRNA operon. Processes pre-crRNA and tracrRNA of type II CRISPR loci if present in the organism. This is Ribonuclease 3 from Dehalococcoides mccartyi (strain ATCC BAA-2266 / KCTC 15142 / 195) (Dehalococcoides ethenogenes (strain 195)).